A 282-amino-acid chain; its full sequence is Phycocyanobilin lyase subunit beta (282 aa).

The protein belongs to the CpcE/RpcE/PecE family. In terms of assembly, cpcE and CpcF associate to form a lyase.

In terms of biological role, required for the chromophorylation of the CpcA gene product. This chain is Phycocyanobilin lyase subunit beta (cpcF1), found in Pseudanabaena tenuis (strain PCC 7409).